Reading from the N-terminus, the 453-residue chain is Homogentisate 1,2-dioxygenase (453 aa).

The disordered stretch occupies residues 1–42 (MLEKAEKQRRAGSGQQRAAGYMPGFGNDFETESLPGALPQGQ). H306 serves as the catalytic Proton acceptor. Positions 349 and 355 each coordinate Fe cation. Residues Y364 and H385 each coordinate homogentisate. H385 lines the Fe cation pocket.

The protein belongs to the homogentisate dioxygenase family. As to quaternary structure, hexamer; dimer of trimers. Fe cation is required as a cofactor.

The catalysed reaction is homogentisate + O2 = 4-maleylacetoacetate + H(+). It participates in amino-acid degradation; L-phenylalanine degradation; acetoacetate and fumarate from L-phenylalanine: step 4/6. Functionally, involved in the catabolism of homogentisate (2,5-dihydroxyphenylacetate or 2,5-OH-PhAc), a central intermediate in the degradation of phenylalanine and tyrosine. Catalyzes the oxidative ring cleavage of the aromatic ring of homogentisate to yield maleylacetoacetate. This chain is Homogentisate 1,2-dioxygenase, found in Rhizobium meliloti (strain 1021) (Ensifer meliloti).